A 205-amino-acid polypeptide reads, in one-letter code: Putative 3-methyladenine DNA glycosylase (205 aa).

This sequence belongs to the DNA glycosylase MPG family.

In Clostridium acetobutylicum (strain ATCC 824 / DSM 792 / JCM 1419 / IAM 19013 / LMG 5710 / NBRC 13948 / NRRL B-527 / VKM B-1787 / 2291 / W), this protein is Putative 3-methyladenine DNA glycosylase.